A 212-amino-acid polypeptide reads, in one-letter code: Imidazole glycerol phosphate synthase subunit HisH (212 aa).

The Glutamine amidotransferase type-1 domain maps to 3–212 (TVAVIDYGMG…QNFAAWDGRW (210 aa)). The Nucleophile role is filled by Cys-81. Catalysis depends on residues His-190 and Glu-192.

Heterodimer of HisH and HisF.

It localises to the cytoplasm. The catalysed reaction is 5-[(5-phospho-1-deoxy-D-ribulos-1-ylimino)methylamino]-1-(5-phospho-beta-D-ribosyl)imidazole-4-carboxamide + L-glutamine = D-erythro-1-(imidazol-4-yl)glycerol 3-phosphate + 5-amino-1-(5-phospho-beta-D-ribosyl)imidazole-4-carboxamide + L-glutamate + H(+). The enzyme catalyses L-glutamine + H2O = L-glutamate + NH4(+). Its pathway is amino-acid biosynthesis; L-histidine biosynthesis; L-histidine from 5-phospho-alpha-D-ribose 1-diphosphate: step 5/9. Functionally, IGPS catalyzes the conversion of PRFAR and glutamine to IGP, AICAR and glutamate. The HisH subunit catalyzes the hydrolysis of glutamine to glutamate and ammonia as part of the synthesis of IGP and AICAR. The resulting ammonia molecule is channeled to the active site of HisF. This Pseudomonas savastanoi pv. phaseolicola (strain 1448A / Race 6) (Pseudomonas syringae pv. phaseolicola (strain 1448A / Race 6)) protein is Imidazole glycerol phosphate synthase subunit HisH.